The following is a 150-amino-acid chain: MSIPFPSAPADKEALENAGLFSPKFDAHGLVTAVVTDARDGELLMVAHMNAEALSLTLETGIAHYYSRSRDKIWKKGETSGNLQTVKEFRTDCDQDAVWLKVSVAGHDATCHTGRRSCFYRTVELSNGDAVTKITDDTRHFDPATTYSNT.

Position 92 (Asp92) interacts with Mg(2+). Cys93 is a Zn(2+) binding site. Mg(2+) contacts are provided by Asp94 and Asp96. The Zn(2+) site is built by Cys111 and Cys118.

The protein belongs to the PRA-CH family. Homodimer. Mg(2+) is required as a cofactor. Zn(2+) serves as cofactor.

The protein localises to the cytoplasm. It carries out the reaction 1-(5-phospho-beta-D-ribosyl)-5'-AMP + H2O = 1-(5-phospho-beta-D-ribosyl)-5-[(5-phospho-beta-D-ribosylamino)methylideneamino]imidazole-4-carboxamide. Its pathway is amino-acid biosynthesis; L-histidine biosynthesis; L-histidine from 5-phospho-alpha-D-ribose 1-diphosphate: step 3/9. Catalyzes the hydrolysis of the adenine ring of phosphoribosyl-AMP. The chain is Phosphoribosyl-AMP cyclohydrolase from Agrobacterium fabrum (strain C58 / ATCC 33970) (Agrobacterium tumefaciens (strain C58)).